A 242-amino-acid chain; its full sequence is Transcriptional activator protein BjaR1 (242 aa).

The HTH luxR-type domain maps to 173-238 (TPYPSTRLTP…HAVALAIRHK (66 aa)). The H-T-H motif DNA-binding region spans 197–216 (AWEIGEILHITQRTAEEHLA).

Belongs to the autoinducer-regulated transcriptional regulatory protein family.

Functionally, transcriptional activator that functions in response to the quorum-sensing autoinducer IV-HSL (isovaleryl-homoserine lactone). Activates BjaI expression. Is sensitive to IV-HSL at concentrations as low as 10 pM. The chain is Transcriptional activator protein BjaR1 (bjaR1) from Bradyrhizobium diazoefficiens (strain JCM 10833 / BCRC 13528 / IAM 13628 / NBRC 14792 / USDA 110).